A 358-amino-acid chain; its full sequence is DNA-directed RNA polymerase subunit alpha (358 aa).

Positions 1–231 are alpha N-terminal domain (alpha-NTD); the sequence is MIQNVTDDKI…NIFLSLSNSS (231 aa). An alpha C-terminal domain (alpha-CTD) region spans residues 266 to 358; that stretch reads QESLGWKKIS…LELINNKDIS (93 aa).

It belongs to the RNA polymerase alpha chain family. As to quaternary structure, in plastids the minimal PEP RNA polymerase catalytic core is composed of four subunits: alpha, beta, beta', and beta''. When a (nuclear-encoded) sigma factor is associated with the core the holoenzyme is formed, which can initiate transcription.

It is found in the plastid. Its subcellular location is the chloroplast. It carries out the reaction RNA(n) + a ribonucleoside 5'-triphosphate = RNA(n+1) + diphosphate. Its function is as follows. DNA-dependent RNA polymerase catalyzes the transcription of DNA into RNA using the four ribonucleoside triphosphates as substrates. In Chara vulgaris (Common stonewort), this protein is DNA-directed RNA polymerase subunit alpha.